A 500-amino-acid chain; its full sequence is MSSPLSQAFAQNFLGHSPRWYKLTVLAFLLLNPLLLWLAGPVTSAWVLVGEFIFTLAMALKCYPLQPGGLLVLEALLLGLATPEALYAELQHNFPVLLLLMFMVAGIYFMKDLLLLLFSRLLLGVRSKTLLSLLFCLLAALLSAFLDALTVTAVVISVAVAFFAVYHRVASGQRASEDYDPATDRQVPELHRAHLEEFRAFLRSLLMHAAVGTALGGVCTLVGEPQNLLIGHEAGWHFVEFFRQVAPVSMPVLAAGLLTCVLLEKSRRFGYGAQLPAAVRQVLAEYAASESRKRGAQQKAALLVQALAALVLIVGLALHVAEVGLIGLLVIVLITAFTGVTDEHQIGRAFQEALPFTALLVVFFAVVAVIHQQHLFTPIIQAVLALPAERQPGMLFIANGLLSAISDNVFVATIYITEVKQALDAGHMSREHFDTLAVAINTGTNLPSVATPNGQAAFLFLLTSSIAPLVRLSYGRMVWMALPYTLVMGGLGWWAVSHWL.

12 helical membrane passes run 28–50 (FLLL…VLVG), 68–88 (GGLL…ALYA), 98–118 (LLLM…LLLF), 121–141 (LLLG…LAAL), 145–165 (FLDA…FFAV), 205–225 (LLMH…VGEP), 244–264 (QVAP…VLLE), 311–331 (VLIV…LLVI), 350–370 (FQEA…VAVI), 394–414 (MLFI…VATI), 449–469 (VATP…IAPL), and 477–497 (MVWM…WAVS).

The protein belongs to the NhaB Na(+)/H(+) (TC 2.A.34) antiporter family.

The protein localises to the cell inner membrane. The enzyme catalyses 2 Na(+)(in) + 3 H(+)(out) = 2 Na(+)(out) + 3 H(+)(in). In terms of biological role, na(+)/H(+) antiporter that extrudes sodium in exchange for external protons. The chain is Na(+)/H(+) antiporter NhaB from Pseudomonas aeruginosa (strain LESB58).